The sequence spans 31 residues: Circulin-B (31 aa).

Residues 1-31 (GVIPCGESCVFIPCISTLLGCSCKNKVCYRN) constitute a cross-link (cyclopeptide (Gly-Asn)). 3 disulfides stabilise this stretch: cysteine 5-cysteine 21, cysteine 9-cysteine 23, and cysteine 14-cysteine 28.

In terms of processing, this is a cyclic peptide.

Probably participates in a plant defense mechanism. Has antibiotic activity. Inhibits the cytopathic effects and replication of the human immunodeficiency virus. Active against both Gram-positive and Gram-negative bacteria. This chain is Circulin-B, found in Chassalia parviflora.